Consider the following 790-residue polypeptide: LMBR1 domain-containing protein 2 homolog B (790 aa).

The span at 1–21 (MSSNTTTPTPTSTPTPTSSPS) shows a compositional bias: low complexity. Positions 1–22 (MSSNTTTPTPTSTPTPTSSPSI) are disordered. The next 5 helical transmembrane spans lie at 34–54 (FGNL…VLIG), 66–86 (IYAT…AYLV), 128–148 (FLYF…QSFS), 167–187 (VILY…ILSV), and 195–215 (FLSF…TITM). Residues 236-266 (LRNYRVEAVVLKTELEDVKRQLIDHLKLIKT) adopt a coiled-coil conformation. Transmembrane regions (helical) follow at residues 401–421 (FIIA…SEIV), 442–462 (PGIG…VCSY), and 539–559 (FTLF…FNLH). Disordered stretches follow at residues 630 to 665 (SQLD…PKLS), 701 to 751 (LGEK…TKDK), and 765 to 790 (SFQD…KNKK). A compositionally biased stretch (polar residues) spans 644–665 (IDSSNRYKPTPTKTSINIPKLS). Residues 706-734 (NASNNNNNNNNNNNNNNSNNKNSNNNNNS) show a composition bias toward low complexity. Polar residues predominate over residues 735 to 746 (ILTSNYESYSTP). Residues 766-778 (FQDDDDHTFDDIE) show a composition bias toward acidic residues.

It belongs to the LIMR family.

The protein localises to the membrane. The protein is LMBR1 domain-containing protein 2 homolog B of Dictyostelium discoideum (Social amoeba).